The primary structure comprises 182 residues: Large ribosomal subunit protein uL10 (182 aa).

Belongs to the universal ribosomal protein uL10 family. In terms of assembly, part of the ribosomal stalk of the 50S ribosomal subunit. The N-terminus interacts with L11 and the large rRNA to form the base of the stalk. The C-terminus forms an elongated spine to which L12 dimers bind in a sequential fashion forming a multimeric L10(L12)X complex.

In terms of biological role, forms part of the ribosomal stalk, playing a central role in the interaction of the ribosome with GTP-bound translation factors. This Gluconacetobacter diazotrophicus (strain ATCC 49037 / DSM 5601 / CCUG 37298 / CIP 103539 / LMG 7603 / PAl5) protein is Large ribosomal subunit protein uL10.